The chain runs to 273 residues: Undecaprenyl-diphosphatase (273 aa).

7 helical membrane-spanning segments follow: residues 4–24, 43–63, 82–102, 108–128, 183–203, 217–237, and 248–268; these read LILL…FLPI, KAKV…CWEY, FVIN…LFIK, LFHP…ILWA, AAEF…FYDV, MFAT…RGFI, and FAWY…SGLV.

The protein belongs to the UppP family.

The protein resides in the cell inner membrane. It catalyses the reaction di-trans,octa-cis-undecaprenyl diphosphate + H2O = di-trans,octa-cis-undecaprenyl phosphate + phosphate + H(+). Functionally, catalyzes the dephosphorylation of undecaprenyl diphosphate (UPP). Confers resistance to bacitracin. This chain is Undecaprenyl-diphosphatase, found in Nitrosomonas europaea (strain ATCC 19718 / CIP 103999 / KCTC 2705 / NBRC 14298).